We begin with the raw amino-acid sequence, 165 residues long: V-type proton ATPase 16 kDa proteolipid subunit (165 aa).

Over 1–10 the chain is Lumenal; sequence MSSTFSGDET. A helical membrane pass occupies residues 11-33; sequence APFFGFLGAAAALVFSCMGAAYG. At 34–55 the chain is on the cytoplasmic side; sequence TAKSGVGVASMGVMRPELVMKS. Residues 56–76 form a helical membrane-spanning segment; that stretch reads IVPVVMAGVLGIYGLIIAVII. Residues 77 to 95 lie on the Lumenal side of the membrane; that stretch reads STGINPKAKSYYLFDGYAH. The chain crosses the membrane as a helical span at residues 96–117; sequence LSSGLACGLAGLSAGMAIGIVG. At 118-129 the chain is on the cytoplasmic side; sequence DAGVRANAQQPK. A helical transmembrane segment spans residues 130 to 155; it reads LFVGMILILIFAEALALYGLIVGIIL. The Lumenal segment spans residues 156–165; the sequence is SSRAGQSRAD.

Belongs to the V-ATPase proteolipid subunit family. As to quaternary structure, V-ATPase is a heteromultimeric enzyme composed of a peripheral catalytic V1 complex (main components: subunits A, B, C, D, E, and F) attached to an integral membrane V0 proton pore complex (main component: the proteolipid protein; which is present as a hexamer that forms the proton-conducting pore). Higher expression in leaves, followed by roots and weakly in flowers. Expression in leaves is light-dependent.

It localises to the vacuole membrane. In terms of biological role, proton-conducting pore forming subunit of the membrane integral V0 complex of vacuolar ATPase. V-ATPase is responsible for acidifying a variety of intracellular compartments in eukaryotic cells. Necessary for the crassulacean acid metabolism. This Kalanchoe daigremontiana (Devil's backbone) protein is V-type proton ATPase 16 kDa proteolipid subunit.